Here is a 179-residue protein sequence, read N- to C-terminus: MAKLHDYYRDQVVSELKNKFGYKSVMQVPRIEKITLNMGVGEALTDKKLLDNAVADLAAISGQKPLVTKARKSVAGFKIRQGYPIGCKVTLRGERMWEFFERLITIAVPRIRDFRGLSAKSFDGRGNYSMGVREQIIFPEIDYDKVDRVRGLDITITTTAKNDEEGQALLAAFNFPFRK.

This sequence belongs to the universal ribosomal protein uL5 family. Part of the 50S ribosomal subunit; part of the 5S rRNA/L5/L18/L25 subcomplex. Contacts the 5S rRNA and the P site tRNA. Forms a bridge to the 30S subunit in the 70S ribosome.

This is one of the proteins that bind and probably mediate the attachment of the 5S RNA into the large ribosomal subunit, where it forms part of the central protuberance. In the 70S ribosome it contacts protein S13 of the 30S subunit (bridge B1b), connecting the 2 subunits; this bridge is implicated in subunit movement. Contacts the P site tRNA; the 5S rRNA and some of its associated proteins might help stabilize positioning of ribosome-bound tRNAs. The protein is Large ribosomal subunit protein uL5 of Haemophilus influenzae (strain 86-028NP).